The chain runs to 250 residues: 5'-nucleotidase SurE (250 aa).

Positions 8, 9, 39, and 91 each coordinate a divalent metal cation.

The protein belongs to the SurE nucleotidase family. The cofactor is a divalent metal cation.

The protein localises to the cytoplasm. The catalysed reaction is a ribonucleoside 5'-phosphate + H2O = a ribonucleoside + phosphate. In terms of biological role, nucleotidase that shows phosphatase activity on nucleoside 5'-monophosphates. The polypeptide is 5'-nucleotidase SurE (Leptospira borgpetersenii serovar Hardjo-bovis (strain JB197)).